We begin with the raw amino-acid sequence, 179 residues long: FADH(2)-dependent resorcinol hydroxylase, reductase component (179 aa).

It belongs to the non-flavoprotein flavin reductase family. In terms of assembly, the FADH(2)-dependent resorcinol hydroxylase is composed of two subunits, GraA (the oxygenase component) and GraD (the reductase component). Both subunits are required for activity.

The enzyme catalyses FADH2 + NAD(+) = FAD + NADH + 2 H(+). Its pathway is aromatic compound metabolism. Its function is as follows. Involved in the gamma-resorcylate (2,6-dihydroxybenzoate) catabolism. Reductase component of the resorcinol hydroxylase, which catalyzes the FADPH-dependent conversion of resorcinol to hydroxyquinol. Catalyzes the reduction of FAD by NADH. The reduced flavin is then transferred to the oxygenase component GraA. In Rhizobium sp. (strain MTP-10005), this protein is FADH(2)-dependent resorcinol hydroxylase, reductase component.